Reading from the N-terminus, the 478-residue chain is UDP-N-acetylmuramate--L-alanine ligase (478 aa).

122–128 (GTHGKTT) provides a ligand contact to ATP.

This sequence belongs to the MurCDEF family.

The protein localises to the cytoplasm. It catalyses the reaction UDP-N-acetyl-alpha-D-muramate + L-alanine + ATP = UDP-N-acetyl-alpha-D-muramoyl-L-alanine + ADP + phosphate + H(+). The protein operates within cell wall biogenesis; peptidoglycan biosynthesis. Its function is as follows. Cell wall formation. This chain is UDP-N-acetylmuramate--L-alanine ligase, found in Stenotrophomonas maltophilia (strain R551-3).